The primary structure comprises 224 residues: Probable mitochondrial import inner membrane translocase subunit Tim17 4 (224 aa).

The next 3 helical transmembrane spans lie at 16–36 (CGCA…LKGF), 60–80 (AIAG…CVMV), and 115–135 (AFVG…VATI).

It belongs to the Tim17/Tim22/Tim23 family. Component of the TIM23 complex at least composed of Tim23, Tim17 (Tim17a1, Tim17a2 or Tim17b1) and a Tim50. The complex interacts with the Tim44 component of the PAM complex.

It localises to the mitochondrion inner membrane. Its function is as follows. Essential component of the TIM23 complex, a complex that mediates the translocation of transit peptide-containing proteins across the mitochondrial inner membrane. The protein is Probable mitochondrial import inner membrane translocase subunit Tim17 4 (Tim17a2) of Drosophila melanogaster (Fruit fly).